The following is a 92-amino-acid chain: Small ribosomal subunit protein uS19 (92 aa).

Belongs to the universal ribosomal protein uS19 family.

Its function is as follows. Protein S19 forms a complex with S13 that binds strongly to the 16S ribosomal RNA. This is Small ribosomal subunit protein uS19 from Sinorhizobium medicae (strain WSM419) (Ensifer medicae).